We begin with the raw amino-acid sequence, 63 residues long: DNA-directed RNA polymerase 7 kDa subunit (63 aa).

This sequence belongs to the poxviridae DNA-directed RNA polymerase 7 kDa subunit family. As to quaternary structure, the DNA-dependent RNA polymerase used for intermediate and late genes expression consists of eight subunits 147 kDa, 133 kDa, 35 kDa, 30 kDa, 22 kDa, 19 kDa, 18 kDa and 7 kDa totalling more than 500 kDa in mass. The same holoenzyme, with the addition of the transcription-specificity factor RAP94, is used for early gene expression.

Its subcellular location is the virion. The enzyme catalyses RNA(n) + a ribonucleoside 5'-triphosphate = RNA(n+1) + diphosphate. In terms of biological role, part of the DNA-dependent RNA polymerase which catalyzes the transcription of viral DNA into RNA using the four ribonucleoside triphosphates as substrates. Responsible for the transcription of early, intermediate and late genes. DNA-dependent RNA polymerase associates with the early transcription factor (ETF) thereby allowing the early genes transcription. Late transcription, and probably also intermediate transcription, require newly synthesized RNA polymerase. This is DNA-directed RNA polymerase 7 kDa subunit (RPO7) from Fowlpox virus (strain NVSL) (FPV).